Here is a 349-residue protein sequence, read N- to C-terminus: L-lactate dehydrogenase (349 aa).

A disordered region spans residues 199 to 219 (APEGSIIGADGNPTTDASTMF).

This sequence belongs to the LDH2/MDH2 oxidoreductase family.

The protein resides in the cytoplasm. It catalyses the reaction (S)-lactate + NAD(+) = pyruvate + NADH + H(+). Its pathway is fermentation; pyruvate fermentation to lactate; (S)-lactate from pyruvate: step 1/1. This chain is L-lactate dehydrogenase (ldh), found in Cupriavidus necator (strain ATCC 17699 / DSM 428 / KCTC 22496 / NCIMB 10442 / H16 / Stanier 337) (Ralstonia eutropha).